Here is a 449-residue protein sequence, read N- to C-terminus: Tubulin beta chain (449 aa).

Positions 11, 69, 138, 142, 143, 144, 204, and 226 each coordinate GTP. Glu69 serves as a coordination point for Mg(2+). A disordered region spans residues 426–449 (QDATAEEEGEFDEEEGEMGAEEGA). Residues 429-449 (TAEEEGEFDEEEGEMGAEEGA) show a composition bias toward acidic residues.

The protein belongs to the tubulin family. As to quaternary structure, dimer of alpha and beta chains. A typical microtubule is a hollow water-filled tube with an outer diameter of 25 nm and an inner diameter of 15 nM. Alpha-beta heterodimers associate head-to-tail to form protofilaments running lengthwise along the microtubule wall with the beta-tubulin subunit facing the microtubule plus end conferring a structural polarity. Microtubules usually have 13 protofilaments but different protofilament numbers can be found in some organisms and specialized cells. It depends on Mg(2+) as a cofactor.

It is found in the cytoplasm. It localises to the cytoskeleton. Tubulin is the major constituent of microtubules, a cylinder consisting of laterally associated linear protofilaments composed of alpha- and beta-tubulin heterodimers. Microtubules grow by the addition of GTP-tubulin dimers to the microtubule end, where a stabilizing cap forms. Below the cap, tubulin dimers are in GDP-bound state, owing to GTPase activity of alpha-tubulin. The protein is Tubulin beta chain of Toxoplasma gondii.